The following is a 280-amino-acid chain: Protein HEAT-INDUCED TAS1 TARGET 4 (280 aa).

This sequence belongs to the heat induced plant HTT protein family. As to expression, expressed in seedlings, leaves, stems, inflorescences and siliques.

The protein localises to the cytoplasm. The protein resides in the nucleus. Its function is as follows. Mediates both basal and acquired thermotolerance. The chain is Protein HEAT-INDUCED TAS1 TARGET 4 from Arabidopsis thaliana (Mouse-ear cress).